The chain runs to 307 residues: tRNA dimethylallyltransferase 1 (307 aa).

11-18 (GPTASGKT) provides a ligand contact to ATP. 13–18 (TASGKT) lines the substrate pocket. Interaction with substrate tRNA regions lie at residues 36 to 39 (DSRQ) and 159 to 163 (QRAIR).

This sequence belongs to the IPP transferase family. As to quaternary structure, monomer. The cofactor is Mg(2+).

It carries out the reaction adenosine(37) in tRNA + dimethylallyl diphosphate = N(6)-dimethylallyladenosine(37) in tRNA + diphosphate. Functionally, catalyzes the transfer of a dimethylallyl group onto the adenine at position 37 in tRNAs that read codons beginning with uridine, leading to the formation of N6-(dimethylallyl)adenosine (i(6)A). The polypeptide is tRNA dimethylallyltransferase 1 (Parabacteroides distasonis (strain ATCC 8503 / DSM 20701 / CIP 104284 / JCM 5825 / NCTC 11152)).